Here is a 232-residue protein sequence, read N- to C-terminus: MDKAQQDALKKAAGIEAAKLIQNGMIAGLGTGSTVRFLVDELGRRVKEEGLEFTGVTTSRRTQEQAEGYGIKIVNIDDVDHIDVTIDGADEVDKNFNGIKGGGAALLWEKIVATNSNKIVWIVDESKVVDTIGKFPLPVEVIPFGAGQVVKKFEAKGYKPVLRLDANGEPVRTDENNYVVDLHLERIDHPQELAQDLITTVGVVEHGLFLNMVDQVIVGDPNGPRVMDNPNK.

Residues 31–34 (TGST), 87–90 (DGAD), and 100–103 (KGGG) contribute to the substrate site. Glutamate 109 acts as the Proton acceptor in catalysis. Lysine 127 serves as a coordination point for substrate.

Belongs to the ribose 5-phosphate isomerase family. In terms of assembly, homodimer.

The enzyme catalyses aldehydo-D-ribose 5-phosphate = D-ribulose 5-phosphate. The protein operates within carbohydrate degradation; pentose phosphate pathway; D-ribose 5-phosphate from D-ribulose 5-phosphate (non-oxidative stage): step 1/1. In terms of biological role, catalyzes the reversible conversion of ribose-5-phosphate to ribulose 5-phosphate. The sequence is that of Ribose-5-phosphate isomerase A from Bifidobacterium adolescentis (strain ATCC 15703 / DSM 20083 / NCTC 11814 / E194a).